Here is a 354-residue protein sequence, read N- to C-terminus: Ferrochelatase (354 aa).

2 residues coordinate Fe cation: His-214 and Glu-295.

Belongs to the ferrochelatase family.

The protein localises to the cytoplasm. The enzyme catalyses heme b + 2 H(+) = protoporphyrin IX + Fe(2+). The protein operates within porphyrin-containing compound metabolism; protoheme biosynthesis; protoheme from protoporphyrin-IX: step 1/1. Its function is as follows. Catalyzes the ferrous insertion into protoporphyrin IX. The polypeptide is Ferrochelatase (Burkholderia ambifaria (strain ATCC BAA-244 / DSM 16087 / CCUG 44356 / LMG 19182 / AMMD) (Burkholderia cepacia (strain AMMD))).